The primary structure comprises 316 residues: Bifunctional peptidase and (3S)-lysyl hydroxylase JMJD7 (316 aa).

The region spanning valine 128–aspartate 307 is the JmjC domain. Fe cation is bound by residues histidine 178, aspartate 180, and histidine 277.

As to quaternary structure, homodimer; disulfide-linked. Interacts with DRG1 and DRG2. Fe(2+) serves as cofactor.

It localises to the nucleus. Its subcellular location is the cytoplasm. It carries out the reaction L-lysyl-[protein] + 2-oxoglutarate + O2 = (3S)-3-hydroxy-L-lysyl-[protein] + succinate + CO2. Functionally, bifunctional enzyme that acts both as an endopeptidase and 2-oxoglutarate-dependent monooxygenase. Endopeptidase that cleaves histones N-terminal tails at the carboxyl side of methylated arginine or lysine residues, to generate 'tailless nucleosomes', which may trigger transcription elongation. Preferentially recognizes and cleaves monomethylated and dimethylated arginine residues of histones H2, H3 and H4. After initial cleavage, continues to digest histones tails via its aminopeptidase activity. Additionally, may play a role in protein biosynthesis by modifying the translation machinery. Acts as a Fe(2+) and 2-oxoglutarate-dependent monooxygenase, catalyzing (S)-stereospecific hydroxylation at C-3 of 'Lys-22' of DRG1 and 'Lys-21' of DRG2 translation factors (TRAFAC), promoting their interaction with ribonucleic acids (RNA). The protein is Bifunctional peptidase and (3S)-lysyl hydroxylase JMJD7 of Homo sapiens (Human).